Consider the following 593-residue polypeptide: Solute carrier family 13 member 2 (593 aa).

The next 4 membrane-spanning stretches (helical) occupy residues 11 to 31 (YRMY…PILV), 53 to 73 (ALPL…MGIM), 86 to 106 (TNVL…WNLH), and 121 to 141 (PALL…WISN). Positions 164 to 184 (SNVEEGSDNPTFELQEPSPQK) are enriched in polar residues. Positions 164-204 (SNVEEGSDNPTFELQEPSPQKETSKVDEKDNGQAQPLPAVP) are disordered. Over residues 185-194 (ETSKVDEKDN) the composition is skewed to basic and acidic residues. A run of 8 helical transmembrane segments spans residues 221–241 (GMSL…LTGT), 270–290 (FAFP…QILF), 327–347 (PMSF…LLWF), 369–389 (VMVS…MVPS), 451–471 (LMPL…LLVA), 485–505 (LLLP…LYVM), 514–534 (LAFM…FGGL), and 543–563 (GIML…SWGV).

Belongs to the SLC13A/DASS transporter (TC 2.A.47) family. NADC subfamily. As to expression, abundant in kidney and small intestine.

The protein resides in the apical cell membrane. The catalysed reaction is succinate(out) + 3 Na(+)(out) = succinate(in) + 3 Na(+)(in). It carries out the reaction fumarate(out) + 3 Na(+)(out) = fumarate(in) + 3 Na(+)(in). It catalyses the reaction 2-oxoglutarate(out) + 3 Na(+)(out) = 2-oxoglutarate(in) + 3 Na(+)(in). Its activity is regulated as follows. Li(+) decreases succinate transport in the presence of Na(+), by competing at one of the three cation binding sites. In terms of biological role, low-affinity sodium-dicarboxylate cotransporter, that mediates the entry of citric acid cycle intermediates, such as succinate, citrate, fumarate and alpha-ketoglutarate (2-oxoglutarate) into the small intestine and renal proximal tubule. Transports the dicarboxylate into the cell with a probable stoichiometry of 3 Na(+) for 1 divalent dicarboxylate, rendering the process electrogenic. Citrate is transported in protonated form as a divalent anion, rather than the trivalent form which is normally found in blood. Has a critical role in renal dicarboxylate transport. The protein is Solute carrier family 13 member 2 (SLC13A2) of Oryctolagus cuniculus (Rabbit).